A 473-amino-acid polypeptide reads, in one-letter code: Photosystem II CP43 reaction center protein (473 aa).

The propeptide occupies 1–14 (MKTLYSLRRFYPVE). Thr15 is modified (N-acetylthreonine). Residue Thr15 is modified to Phosphothreonine. A run of 5 helical transmembrane segments spans residues 69 to 93 (LFEV…PHLA), 134 to 155 (LLGP…KDRN), 178 to 200 (KALY…RKIT), 255 to 275 (KPFA…LSYS), and 291 to 312 (WFNN…ASQA). Glu367 lines the [CaMn4O5] cluster pocket. A helical membrane pass occupies residues 447–471 (RARAAAAGFEKGIDRDFEPVLSMTP).

This sequence belongs to the PsbB/PsbC family. PsbC subfamily. In terms of assembly, PSII is composed of 1 copy each of membrane proteins PsbA, PsbB, PsbC, PsbD, PsbE, PsbF, PsbH, PsbI, PsbJ, PsbK, PsbL, PsbM, PsbT, PsbX, PsbY, PsbZ, Psb30/Ycf12, at least 3 peripheral proteins of the oxygen-evolving complex and a large number of cofactors. It forms dimeric complexes. The cofactor is Binds multiple chlorophylls and provides some of the ligands for the Ca-4Mn-5O cluster of the oxygen-evolving complex. It may also provide a ligand for a Cl- that is required for oxygen evolution. PSII binds additional chlorophylls, carotenoids and specific lipids..

The protein resides in the plastid. It localises to the chloroplast thylakoid membrane. One of the components of the core complex of photosystem II (PSII). It binds chlorophyll and helps catalyze the primary light-induced photochemical processes of PSII. PSII is a light-driven water:plastoquinone oxidoreductase, using light energy to abstract electrons from H(2)O, generating O(2) and a proton gradient subsequently used for ATP formation. In Vitis vinifera (Grape), this protein is Photosystem II CP43 reaction center protein.